The following is a 265-amino-acid chain: Regulator of G-protein signaling 9-binding protein (265 aa).

The tract at residues 1–37 is disordered; sequence MAAPEVSSAGPNMLHPNSRTLTLRGKRGHAAEDSSQG. Positions 70-92 form a coiled coil; sequence TRLREELEESRKKAFDLSTDLSN. The disordered stretch occupies residues 168–187; sequence KSPSSSRMHENQQRTERPCS. The span at 174-186 shows a compositional bias: basic and acidic residues; sequence RMHENQQRTERPC.

It belongs to the RGS7BP/RGS9BP family.

In terms of biological role, regulator of G protein-coupled receptor (GPCR) signaling. Probably acts by regulating the activity of some 'R7' family protein (RGS6, RGS7, RGS9 and/or RGS11). This Xenopus tropicalis (Western clawed frog) protein is Regulator of G-protein signaling 9-binding protein (rgs9bp).